The following is a 599-amino-acid chain: Elongation factor 4 (599 aa).

One can recognise a tr-type G domain in the interval 5-187; it reads SHIRNFSIVA…SIVQNLPAPK (183 aa). Residues 17–22 and 134–137 each bind GTP; these read DHGKST and NKID.

Belongs to the TRAFAC class translation factor GTPase superfamily. Classic translation factor GTPase family. LepA subfamily.

Its subcellular location is the cell inner membrane. It catalyses the reaction GTP + H2O = GDP + phosphate + H(+). In terms of biological role, required for accurate and efficient protein synthesis under certain stress conditions. May act as a fidelity factor of the translation reaction, by catalyzing a one-codon backward translocation of tRNAs on improperly translocated ribosomes. Back-translocation proceeds from a post-translocation (POST) complex to a pre-translocation (PRE) complex, thus giving elongation factor G a second chance to translocate the tRNAs correctly. Binds to ribosomes in a GTP-dependent manner. This chain is Elongation factor 4, found in Roseobacter denitrificans (strain ATCC 33942 / OCh 114) (Erythrobacter sp. (strain OCh 114)).